A 120-amino-acid polypeptide reads, in one-letter code: MSKANTTNARRKNRVRMALRRTASGRPRLSVFRSSKHIYAQVIDDLKGVTLASASSLEKTMREAGNTGADIDAAKAVGKLLAERAVKNGVKEVVFDRGGYLYHGRIKALADAARESGLSF.

This sequence belongs to the universal ribosomal protein uL18 family. Part of the 50S ribosomal subunit; part of the 5S rRNA/L5/L18/L25 subcomplex. Contacts the 5S and 23S rRNAs.

This is one of the proteins that bind and probably mediate the attachment of the 5S RNA into the large ribosomal subunit, where it forms part of the central protuberance. This is Large ribosomal subunit protein uL18 from Rhodopseudomonas palustris (strain BisA53).